A 230-amino-acid chain; its full sequence is Uracil-DNA glycosylase (230 aa).

Residue Asp71 is the Proton acceptor of the active site.

The protein belongs to the uracil-DNA glycosylase (UDG) superfamily. UNG family.

The protein localises to the cytoplasm. The catalysed reaction is Hydrolyzes single-stranded DNA or mismatched double-stranded DNA and polynucleotides, releasing free uracil.. Its function is as follows. Excises uracil residues from the DNA which can arise as a result of misincorporation of dUMP residues by DNA polymerase or due to deamination of cytosine. The sequence is that of Uracil-DNA glycosylase from Tropheryma whipplei (strain TW08/27) (Whipple's bacillus).